Consider the following 452-residue polypeptide: Protein disulfide-isomerase TMX3 (452 aa).

A signal peptide spans 1–26 (MAAAGLCFILAIVSSTSLLASVPVSA). The region spanning 27 to 128 (LVEDLDDSFK…KEDIVEFANR (102 aa)) is the Thioredoxin domain. The Lumenal segment spans residues 27 to 375 (LVEDLDDSFK…TVVSVFKSSP (349 aa)). Residues cysteine 53 and cysteine 56 each act as nucleophile in the active site. The cysteines at positions 53 and 56 are disulfide-linked. 2 N-linked (GlcNAc...) asparagine glycosylation sites follow: asparagine 258 and asparagine 313. The helical transmembrane segment at 376 to 396 (LLGCFLFGLPLGVISIMCYGI) threads the bilayer. The Cytoplasmic segment spans residues 397 to 452 (CTADTEDGSEEMTRKDVIDQNASDEGSDEEEEKGREITDVSDEDQQEKDFMEKKID). The disordered stretch occupies residues 405 to 452 (SEEMTRKDVIDQNASDEGSDEEEEKGREITDVSDEDQQEKDFMEKKID). The segment covering 443–452 (EKDFMEKKID) has biased composition (basic and acidic residues). The short motif at 449-452 (KKID) is the Di-lysine motif element.

It belongs to the protein disulfide isomerase family.

It localises to the endoplasmic reticulum membrane. It catalyses the reaction Catalyzes the rearrangement of -S-S- bonds in proteins.. Probable disulfide isomerase, which participates in the folding of proteins containing disulfide bonds. May act as a dithiol oxidase. Acts as a regulator of endoplasmic reticulum-mitochondria contact sites via its ability to regulate redox signals. The sequence is that of Protein disulfide-isomerase TMX3 (tmx3) from Xenopus laevis (African clawed frog).